The sequence spans 474 residues: Glutamate--tRNA ligase (474 aa).

Positions 9–19 match the 'HIGH' region motif; sequence PSPTGYLHVGG. A 'KMSKS' region motif is present at residues 240-244; it reads KLSKR. Lysine 243 provides a ligand contact to ATP.

It belongs to the class-I aminoacyl-tRNA synthetase family. Glutamate--tRNA ligase type 1 subfamily. Monomer.

It is found in the cytoplasm. The enzyme catalyses tRNA(Glu) + L-glutamate + ATP = L-glutamyl-tRNA(Glu) + AMP + diphosphate. In terms of biological role, catalyzes the attachment of glutamate to tRNA(Glu) in a two-step reaction: glutamate is first activated by ATP to form Glu-AMP and then transferred to the acceptor end of tRNA(Glu). This Vibrio vulnificus (strain YJ016) protein is Glutamate--tRNA ligase.